A 181-amino-acid polypeptide reads, in one-letter code: Photosystem I assembly protein Ycf4 (181 aa).

The next 2 membrane-spanning stretches (helical) occupy residues 19–41 (YAWCFILMTGGIGFCLTGVGSYF) and 61–83 (IVMMFYGTIAILFSLFLMYSIFT).

It belongs to the Ycf4 family.

It is found in the plastid. Its subcellular location is the chloroplast thylakoid membrane. Seems to be required for the assembly of the photosystem I complex. This chain is Photosystem I assembly protein Ycf4, found in Guillardia theta (Cryptophyte).